Consider the following 333-residue polypeptide: Ketol-acid reductoisomerase (NADP(+)) (333 aa).

The 171-residue stretch at 1–171 (MSNDTQPKIA…GGARANIIKT (171 aa)) folds into the KARI N-terminal Rossmann domain. NADP(+) contacts are provided by residues 14 to 17 (YGSQ), Arg-37, Thr-42, and 72 to 75 (DMVQ). His-97 is an active-site residue. Residue Gly-123 coordinates NADP(+). The region spanning 172-317 (TFKEETETDL…KKLRAKMVWL (146 aa)) is the KARI C-terminal knotted domain. Asp-180, Glu-184, Glu-216, and Glu-220 together coordinate Mg(2+). Residue Ser-241 participates in substrate binding.

The protein belongs to the ketol-acid reductoisomerase family. The cofactor is Mg(2+).

The catalysed reaction is (2R)-2,3-dihydroxy-3-methylbutanoate + NADP(+) = (2S)-2-acetolactate + NADPH + H(+). It catalyses the reaction (2R,3R)-2,3-dihydroxy-3-methylpentanoate + NADP(+) = (S)-2-ethyl-2-hydroxy-3-oxobutanoate + NADPH + H(+). Its pathway is amino-acid biosynthesis; L-isoleucine biosynthesis; L-isoleucine from 2-oxobutanoate: step 2/4. It participates in amino-acid biosynthesis; L-valine biosynthesis; L-valine from pyruvate: step 2/4. Functionally, involved in the biosynthesis of branched-chain amino acids (BCAA). Catalyzes an alkyl-migration followed by a ketol-acid reduction of (S)-2-acetolactate (S2AL) to yield (R)-2,3-dihydroxy-isovalerate. In the isomerase reaction, S2AL is rearranged via a Mg-dependent methyl migration to produce 3-hydroxy-3-methyl-2-ketobutyrate (HMKB). In the reductase reaction, this 2-ketoacid undergoes a metal-dependent reduction by NADPH to yield (R)-2,3-dihydroxy-isovalerate. The chain is Ketol-acid reductoisomerase (NADP(+)) from Xanthomonas euvesicatoria pv. vesicatoria (strain 85-10) (Xanthomonas campestris pv. vesicatoria).